The following is a 448-amino-acid chain: N-succinylarginine dihydrolase (448 aa).

Substrate is bound by residues 19 to 28, Asn-110, and 137 to 138; these read GGLSYGNVAS and HR. Glu-174 is an active-site residue. Arg-214 contacts substrate. His-250 is an active-site residue. Residues Asp-252 and Asn-365 each coordinate substrate. Cys-371 serves as the catalytic Nucleophile.

It belongs to the succinylarginine dihydrolase family. Homodimer.

It catalyses the reaction N(2)-succinyl-L-arginine + 2 H2O + 2 H(+) = N(2)-succinyl-L-ornithine + 2 NH4(+) + CO2. It functions in the pathway amino-acid degradation; L-arginine degradation via AST pathway; L-glutamate and succinate from L-arginine: step 2/5. Functionally, catalyzes the hydrolysis of N(2)-succinylarginine into N(2)-succinylornithine, ammonia and CO(2). The chain is N-succinylarginine dihydrolase from Pseudomonas syringae pv. tomato (strain ATCC BAA-871 / DC3000).